Consider the following 176-residue polypeptide: Inner membrane-spanning protein YciB (176 aa).

Helical transmembrane passes span 3–23, 24–44, 49–69, 81–101, 119–139, and 149–169; these read FLFD…WGIF, TATA…AFRH, TMLW…LVLH, LYWL…NNLI, LNVA…YVVH, and FKLF…SLWL.

The protein belongs to the YciB family.

The protein localises to the cell inner membrane. Plays a role in cell envelope biogenesis, maintenance of cell envelope integrity and membrane homeostasis. The sequence is that of Inner membrane-spanning protein YciB from Burkholderia ambifaria (strain MC40-6).